Reading from the N-terminus, the 687-residue chain is Adhesion G-protein coupled receptor G1 (687 aa).

Residues 1 to 25 (MAVQVLRQMVYFLLSLFSLVQGAHS) form the signal peptide. Position 26 to 33 (26 to 33 (GSPREDFR)) interacts with heparin. At 26-402 (GSPREDFRFC…TEVEATHKHY (377 aa)) the chain is on the extracellular side. 2 disulfide bridges follow: Cys35-Cys91 and Cys121-Cys177. N-linked (GlcNAc...) asparagine glycosylation is found at Asn39, Asn148, and Asn171. 190 to 200 (LQHPQKAAKRP) contacts heparin. The 172-residue stretch at 224–395 (DTLSFEEDRV…AVLMVSSTEV (172 aa)) folds into the GAIN-B domain. N-linked (GlcNAc...) asparagine glycans are attached at residues Asn234, Asn303, Asn324, and Asn341. Intrachain disulfides connect Cys346–Cys377 and Cys366–Cys379. The interval 346-395 (CVFWVEDPASSSTGSWSSAGCETVSRDTQTSCLCNHLTYFAVLMVSSTEV) is GPS. Positions 384–397 (YFAVLMVSSTEVEA) are stachel. The chain crosses the membrane as a helical span at residues 403–423 (LTLLSYVGCVISALACVFTIA). Residues 424 to 442 (AYLCSRRKSRDYTIKVHMN) lie on the Cytoplasmic side of the membrane. The chain crosses the membrane as a helical span at residues 443–463 (LLSAVFLLDVSFLLSEPVALT). The Extracellular segment spans residues 464-471 (GSEAACRT). A helical membrane pass occupies residues 472–492 (SAMFLHFSLLACLSWMGLEGY). Residues 493-512 (NLYRLVVEVFGTYVPGYLLK) are Cytoplasmic-facing. A helical membrane pass occupies residues 513–533 (LSIVGWGFPVFLVTLVALVDV). The Extracellular segment spans residues 534 to 570 (NNYGPIILAVRRTPERVTYPSMCWIRDSLVSYVTNLG). A helical transmembrane segment spans residues 571 to 591 (LFSLVFLFNLAMLATMVVQIL). The Cytoplasmic segment spans residues 592–603 (RLRPHSQNWPHV). Residues 604-624 (LTLLGLSLVLGLPWALVFFSF) traverse the membrane as a helical segment. At 625–630 (ASGTFQ) the chain is on the extracellular side. The helical transmembrane segment at 631-651 (LVILYLFSIITSFQGFLIFLW) threads the bilayer. Topologically, residues 652-687 (YWSMRFQAQGGPSPLKNNSDSAKLPISSGSTSSSRI) are cytoplasmic. The disordered stretch occupies residues 664–687 (SPLKNNSDSAKLPISSGSTSSSRI). Residues 678–687 (SSGSTSSSRI) are compositionally biased toward low complexity.

This sequence belongs to the G-protein coupled receptor 2 family. LN-TM7 subfamily. Heterodimer of 2 chains generated by proteolytic processing; the large extracellular N-terminal fragment (ADGRG1 NT) and the membrane-bound C-terminal fragment (ADGRG1-CT) predominantly remain associated and non-covalently linked. ADGRG1 NT self-associates in a trans-trans manner; the homophilic interaction enhances receptor signaling. Interacts with TGM2. Interacts with heparin; leading to the reduction of ADGRG1 shedding. Interacts with COL3A1. Part of a GPCR-tetraspanin complex at least consisting of ADGRG1, CD81, eventually CD9, and GNA11 in which CD81 is enhancing the association of ADGRG1 with GNA11. Post-translationally, autoproteolytically cleaved into 2 fragments; the large extracellular N-terminal fragment and the membroune-bound C-terminal fragment predominantly remain associated and non-covalently linked. N-glycosylated. The secreted ADGRG1 N-terminal fragment is heavily glycosylated. In terms of processing, ubiquitinated. Undergoes polyubiquitination upon activation. In terms of tissue distribution, expressed in neural progenitor cells in fetal forbrain. Expressed in migrating neurons. Expressed in radial glial endfeet (at protein level). Expressed in peritubular myoid cells, Sertoli cells, and germ cells of the testis.

The protein resides in the cell membrane. It is found in the secreted. It localises to the membrane raft. Its activity is regulated as follows. Forms a heterodimer of 2 chains generated by proteolytic processing that remain associated through non-covalent interactions mediated by the GAIN-B domain. In the inactivated receptor, the Stachel sequence (also named stalk) is embedded in the GAIN-B domain, where it adopts a beta-strand conformation. On activation, the Stachel moves into the 7 transmembrane region and adopts a twisted hook-shaped configuration that forms contacts within the receptor, leading to coupling of a G-alpha protein, which activates signaling. The cleaved GAIN-B and N-terminal domains can then dissociate from the rest of the receptor. Activated by the small-molecule agonist, 3-alpha-acetoxydihydrodeoxygedunin (3-alpha-DOG). Its function is as follows. Adhesion G-protein coupled receptor (aGPCR) for steroid hormone 17alpha-hydroxypregnenolone (17-OH), which is involved in cell adhesion and cell-cell interactions. Ligand binding causes a conformation change that triggers signaling via guanine nucleotide-binding proteins (G proteins) and modulates the activity of downstream effectors, such as RhoA pathway. ADGRG1 is coupled to G(12) and/or G(13) G proteins (GNA12 and GNA13, respectively) and mediates the activation Rho small GTPases. Acts as a potent suppressor of ferroptosis: binding to 17-OH-binding initiates signaling that down-regulates CD36 and alleviates ferroptosis-induced liver injury. Ligand-binding also induces cell adhesion activity via association with proteins such as collagen III/COL3A1 and TGM2. Mediates cell matrix adhesion in developing neurons and hematopoietic stem cells. Involved in cortical development, specifically in maintenance of the pial basement membrane integrity and in cortical lamination: association with COL3A1 in the developing brain inhibits neuronal migration via activation of the RhoA pathway. Together with TGM2, acts as a regulator of myelination and myelin repair in oligodendrocyte precursor cells. Acts as a hemostatic sensor of shear force: G protein-coupled receptor signaling is activated in response to shear force in platelets, promoting G(13) G protein signaling, and platelet shape change and aggregation in a COL3A1-dependent manner. Acts as an inhibitor of VEGFA production thereby inhibiting angiogenesis through a signaling pathway mediated by PRKCA. Plays a role in the maintenance of hematopoietic stem cells in bone marrow niche. Plays an essential role in testis development. Adhesion G-protein coupled receptor (aGPCR) for phosphatidylserine, which is involved in microglia-mediated synapse pruning during development. Required to maintain appropriate synaptic numbers in several brain regions in a time- and circuit-dependent fashion: phosphatidylserine-binding acts as a 'eat-me' signal for apoptotic cells, leading to microglial engulfment of phosphatidylserine-positive synapses. The protein is Adhesion G-protein coupled receptor G1 of Mus musculus (Mouse).